The following is a 317-amino-acid chain: Transcriptional regulator LsrR (317 aa).

Residues 33-56 (QSEISDRLGLTRLKVSRLLEKGHQ) constitute a DNA-binding region (H-T-H motif).

The protein belongs to the SorC transcriptional regulatory family.

It is found in the cytoplasm. Inactivated by phosphorylated autoinducer-2 (phospho-AI-2). Phospho-AI-2 acts by binding to LsrR, which is then unable to bind to the promoter regions, allowing the transcription of the target genes. Transcriptional regulator that represses the expression of the lsr operon in the absence of the quorum-sensing signaling molecule autoinducer 2 (AI-2). It also represses the expression of the lsrRK operon. Acts by binding directly to the lsrA and lsrR promoter regions. In the presence of phosphorylated autoinducer-2 (phospho-AI-2), LsrR is inactivated, leading to the transcription of the genes. The sequence is that of Transcriptional regulator LsrR (lsrR) from Escherichia coli O139:H28 (strain E24377A / ETEC).